We begin with the raw amino-acid sequence, 231 residues long: Orotidine 5'-phosphate decarboxylase (231 aa).

Residues D11, K33, 60–69 (DLKFHDIPNT), T120, R181, Q190, G210, and R211 contribute to the substrate site. Residue K62 is the Proton donor of the active site.

It belongs to the OMP decarboxylase family. Type 1 subfamily. Homodimer.

The catalysed reaction is orotidine 5'-phosphate + H(+) = UMP + CO2. It participates in pyrimidine metabolism; UMP biosynthesis via de novo pathway; UMP from orotate: step 2/2. In terms of biological role, catalyzes the decarboxylation of orotidine 5'-monophosphate (OMP) to uridine 5'-monophosphate (UMP). This is Orotidine 5'-phosphate decarboxylase from Pseudoalteromonas atlantica (strain T6c / ATCC BAA-1087).